Here is an 89-residue protein sequence, read N- to C-terminus: UPF0297 protein SEQ_2150 (89 aa).

It belongs to the UPF0297 family.

The polypeptide is UPF0297 protein SEQ_2150 (Streptococcus equi subsp. equi (strain 4047)).